A 509-amino-acid polypeptide reads, in one-letter code: GMP synthase [glutamine-hydrolyzing] (509 aa).

In terms of domain architecture, Glutamine amidotransferase type-1 spans 4-193; sequence NVLILDFGSQ…LIKIAGTKAT (190 aa). C79 functions as the Nucleophile in the catalytic mechanism. Active-site residues include H167 and E169. The GMPS ATP-PPase domain maps to 194 to 384; it reads WTPGKFVDLT…LGIDKELLGR (191 aa). ATP is bound at residue 221–227; sequence SGGVDST.

In terms of assembly, homodimer.

The catalysed reaction is XMP + L-glutamine + ATP + H2O = GMP + L-glutamate + AMP + diphosphate + 2 H(+). The protein operates within purine metabolism; GMP biosynthesis; GMP from XMP (L-Gln route): step 1/1. Its function is as follows. Catalyzes the synthesis of GMP from XMP. This chain is GMP synthase [glutamine-hydrolyzing], found in Christiangramia forsetii (strain DSM 17595 / CGMCC 1.15422 / KT0803) (Gramella forsetii).